A 633-amino-acid chain; its full sequence is Extracellular metalloproteinase 3 (633 aa).

The N-terminal stretch at 1-18 (MHGLLLAGLLALPMNVLA) is a signal peptide. Residues 19-246 (HPAEQHASNV…VHNVVDYVAS (228 aa)) constitute a propeptide that is removed on maturation. Residue Asn-410 is glycosylated (N-linked (GlcNAc...) asparagine). His-429 is a binding site for Zn(2+). Glu-430 is an active-site residue. Position 433 (His-433) interacts with Zn(2+). 2 N-linked (GlcNAc...) asparagine glycosylation sites follow: Asn-480 and Asn-622.

The protein belongs to the peptidase M36 family. Zn(2+) is required as a cofactor.

It is found in the secreted. Functionally, secreted metalloproteinase probably acting as a virulence factor. The protein is Extracellular metalloproteinase 3 (MEP3) of Arthroderma benhamiae (Trichophyton mentagrophytes).